Consider the following 330-residue polypeptide: Ketol-acid reductoisomerase (NADP(+)) (330 aa).

The 181-residue stretch at 1–181 folds into the KARI N-terminal Rossmann domain; it reads MNVYYEQDAD…GGTKAGVIET (181 aa). Residues 24-27, Arg47, Ser50, Ser52, and 82-85 contribute to the NADP(+) site; these read YGSQ and DQTQ. His107 is a catalytic residue. Gly133 lines the NADP(+) pocket. The 146-residue stretch at 182-327 folds into the KARI C-terminal knotted domain; it reads NFKDETETDL…AKLRNMMSWL (146 aa). The Mg(2+) site is built by Asp190, Glu194, Glu226, and Glu230. Ser251 provides a ligand contact to substrate.

The protein belongs to the ketol-acid reductoisomerase family. Mg(2+) serves as cofactor.

It catalyses the reaction (2R)-2,3-dihydroxy-3-methylbutanoate + NADP(+) = (2S)-2-acetolactate + NADPH + H(+). The enzyme catalyses (2R,3R)-2,3-dihydroxy-3-methylpentanoate + NADP(+) = (S)-2-ethyl-2-hydroxy-3-oxobutanoate + NADPH + H(+). Its pathway is amino-acid biosynthesis; L-isoleucine biosynthesis; L-isoleucine from 2-oxobutanoate: step 2/4. It participates in amino-acid biosynthesis; L-valine biosynthesis; L-valine from pyruvate: step 2/4. Its function is as follows. Involved in the biosynthesis of branched-chain amino acids (BCAA). Catalyzes an alkyl-migration followed by a ketol-acid reduction of (S)-2-acetolactate (S2AL) to yield (R)-2,3-dihydroxy-isovalerate. In the isomerase reaction, S2AL is rearranged via a Mg-dependent methyl migration to produce 3-hydroxy-3-methyl-2-ketobutyrate (HMKB). In the reductase reaction, this 2-ketoacid undergoes a metal-dependent reduction by NADPH to yield (R)-2,3-dihydroxy-isovalerate. This chain is Ketol-acid reductoisomerase (NADP(+)), found in Chlorobium luteolum (strain DSM 273 / BCRC 81028 / 2530) (Pelodictyon luteolum).